The sequence spans 87 residues: UPF0297 protein Sca_1229 (87 aa).

This sequence belongs to the UPF0297 family.

This is UPF0297 protein Sca_1229 from Staphylococcus carnosus (strain TM300).